Consider the following 753-residue polypeptide: 5-methyltetrahydropteroyltriglutamate--homocysteine methyltransferase (753 aa).

5-methyltetrahydropteroyltri-L-glutamate-binding positions include 17 to 20 and Lys-117; that span reads RELK. L-homocysteine contacts are provided by residues 431 to 433 and Glu-484; that span reads IGS. L-methionine is bound by residues 431-433 and Glu-484; that span reads IGS. 5-methyltetrahydropteroyltri-L-glutamate contacts are provided by residues 515-516 and Trp-561; that span reads RC. Asp-599 is a binding site for L-homocysteine. L-methionine is bound at residue Asp-599. Glu-605 is a binding site for 5-methyltetrahydropteroyltri-L-glutamate. The Zn(2+) site is built by His-641, Cys-643, and Glu-665. His-694 serves as the catalytic Proton donor. Cys-726 lines the Zn(2+) pocket.

Belongs to the vitamin-B12 independent methionine synthase family. The cofactor is Zn(2+).

The enzyme catalyses 5-methyltetrahydropteroyltri-L-glutamate + L-homocysteine = tetrahydropteroyltri-L-glutamate + L-methionine. Its pathway is amino-acid biosynthesis; L-methionine biosynthesis via de novo pathway; L-methionine from L-homocysteine (MetE route): step 1/1. Functionally, catalyzes the transfer of a methyl group from 5-methyltetrahydrofolate to homocysteine resulting in methionine formation. This is 5-methyltetrahydropteroyltriglutamate--homocysteine methyltransferase from Escherichia coli (strain UTI89 / UPEC).